The primary structure comprises 146 residues: Inner membrane protein YdgK (146 aa).

The Cytoplasmic segment spans residues 1–12; the sequence is MTTTTPQRIGGW. Residues 13-33 form a helical membrane-spanning segment; sequence LLGPLAWLLVALLSTTLALLL. The Periplasmic segment spans residues 34 to 59; sequence YTAALSSPQTFQTLGGQALTTQILWG. A helical membrane pass occupies residues 60–80; that stretch reads VSFITAIALWYYTLWLTIAFF. Residues 81–89 are Cytoplasmic-facing; sequence KRRRCVPKH. The chain crosses the membrane as a helical span at residues 90–110; the sequence is YIIWLLISVLLAVKAFAFSPV. The Periplasmic portion of the chain corresponds to 111 to 112; sequence ED. A helical membrane pass occupies residues 113 to 133; it reads GIAVRQLLFTLLATALIVPYF. The Cytoplasmic segment spans residues 134–146; the sequence is KRSSRVKATFVNP.

The protein to Synechocystis PCC 6803 sll0481.

The protein resides in the cell inner membrane. The protein is Inner membrane protein YdgK (ydgK) of Escherichia coli (strain K12).